Reading from the N-terminus, the 147-residue chain is Cyanate hydratase (147 aa).

Active-site residues include R88, E91, and S114.

Belongs to the cyanase family.

The catalysed reaction is cyanate + hydrogencarbonate + 3 H(+) = NH4(+) + 2 CO2. In terms of biological role, catalyzes the reaction of cyanate with bicarbonate to produce ammonia and carbon dioxide. The chain is Cyanate hydratase from Parasynechococcus marenigrum (strain WH8102).